We begin with the raw amino-acid sequence, 217 residues long: Uracil-DNA glycosylase (217 aa).

The Proton acceptor role is filled by Asp-62.

This sequence belongs to the uracil-DNA glycosylase (UDG) superfamily. UNG family.

Its subcellular location is the cytoplasm. The catalysed reaction is Hydrolyzes single-stranded DNA or mismatched double-stranded DNA and polynucleotides, releasing free uracil.. Excises uracil residues from the DNA which can arise as a result of misincorporation of dUMP residues by DNA polymerase or due to deamination of cytosine. The polypeptide is Uracil-DNA glycosylase (Streptococcus pyogenes serotype M3 (strain ATCC BAA-595 / MGAS315)).